Consider the following 616-residue polypeptide: Polypeptide N-acetylgalactosaminyltransferase 3 (616 aa).

Residues 13–33 (FFHWKLWKFSIIVFVFLVFLF) traverse the membrane as a helical; Signal-anchor for type II membrane protein segment. A catalytic subdomain A region spans residues 182–291 (LPTTSIIIVF…YGWLEPLLAR (110 aa)). Mn(2+) contacts are provided by aspartate 275, histidine 277, and histidine 413. Positions 354-416 (PIRTPTFAGG…PCSVVGHVFR (63 aa)) are catalytic subdomain B. An N-linked (GlcNAc...) asparagine glycan is attached at asparagine 482. The region spanning 512-616 (NRMCLDVGEN…FQKWIFGQND (105 aa)) is the Ricin B-type lectin domain. Cysteine 515 and cysteine 533 are oxidised to a cystine. The UDP-N-acetyl-alpha-D-galactosamine site is built by aspartate 517, glutamate 520, histidine 534, and asparagine 539. Cysteine 588 and cysteine 601 are oxidised to a cystine.

This sequence belongs to the glycosyltransferase 2 family. GalNAc-T subfamily. Mn(2+) serves as cofactor.

It localises to the golgi apparatus. Its subcellular location is the golgi stack membrane. The enzyme catalyses L-seryl-[protein] + UDP-N-acetyl-alpha-D-galactosamine = a 3-O-[N-acetyl-alpha-D-galactosaminyl]-L-seryl-[protein] + UDP + H(+). It catalyses the reaction L-threonyl-[protein] + UDP-N-acetyl-alpha-D-galactosamine = a 3-O-[N-acetyl-alpha-D-galactosaminyl]-L-threonyl-[protein] + UDP + H(+). Its pathway is protein modification; protein glycosylation. Its function is as follows. Catalyzes the initial reaction in O-linked oligosaccharide biosynthesis, the transfer of an N-acetyl-D-galactosamine residue to a serine or threonine residue on the protein receptor. Glycosylates FGF23. This is Polypeptide N-acetylgalactosaminyltransferase 3 (GALNT3) from Taeniopygia guttata (Zebra finch).